The following is a 1760-amino-acid chain: Chitin synthase csmB (1760 aa).

A compositionally biased stretch (low complexity) spans 1–17 (MSNRFSVYSSHSTGVSS). Positions 1 to 23 (MSNRFSVYSSHSTGVSSARPSAP) are disordered. In terms of domain architecture, Myosin motor spans 1-374 (MSNRFSVYSS…TVSITVVDIP (374 aa)). An N-linked (GlcNAc...) asparagine glycan is attached at Asn-275. A disordered region spans residues 344 to 363 (LDNDPSTSGGSGPGGQWTDD). A region of interest (actin-binding) is located at residue Pro-374. 2 consecutive transmembrane segments (helical) span residues 731–751 (IWVG…LRWI) and 767–787 (LVLM…IIAF). Asn-878, Asn-906, and Asn-995 each carry an N-linked (GlcNAc...) asparagine glycan. The helical transmembrane segment at 1029–1049 (ILLSFTVLICAVILVKFVSAL) threads the bilayer. N-linked (GlcNAc...) asparagine glycosylation is present at Asn-1394. 3 helical membrane passes run 1419–1439 (FVVL…VYLG), 1452–1472 (FPMI…IIFL), and 1480–1500 (IGWM…LPLY). N-linked (GlcNAc...) asparagine glycans are attached at residues Asn-1584 and Asn-1652. A DEK-C domain is found at 1702–1758 (GPDEGAITEAIRACLAEVDLDTVTKKQVRALVEQRLQTTLMGDKRTFLDRQIDHELA).

In the N-terminal section; belongs to the TRAFAC class myosin-kinesin ATPase superfamily. Myosin family. This sequence in the C-terminal section; belongs to the chitin synthase family. Class V subfamily.

It is found in the cell membrane. The protein localises to the cell septum. The protein resides in the cell tip. It carries out the reaction [(1-&gt;4)-N-acetyl-beta-D-glucosaminyl](n) + UDP-N-acetyl-alpha-D-glucosamine = [(1-&gt;4)-N-acetyl-beta-D-glucosaminyl](n+1) + UDP + H(+). Its function is as follows. Polymerizes chitin, a structural polymer of the cell wall and septum, by transferring the sugar moiety of UDP-GlcNAc to the non-reducing end of the growing chitin polymer. Plays an important role in septal growth or maintenance. Mediates colony spore formation. The protein is Chitin synthase csmB of Aspergillus niger (strain ATCC MYA-4892 / CBS 513.88 / FGSC A1513).